The sequence spans 141 residues: Bombinins BLP-7/H-BO (141 aa).

Positions 1-18 are cleaved as a signal peptide; sequence MNFKYIIAVSFLIASTYA. A propeptide spanning residues 19–43 is cleaved from the precursor; it reads RSVKNDEQSLSQRDVLDEESLREIR. At Asn-70 the chain carries Asparagine amide. A propeptide spanning residues 74-123 is cleaved from the precursor; that stretch reads TAEEHEVMKRLEAVMRDLDSLDHPEEASEKETRGFNQEEIANLFTKKEKR. The residue at position 140 (Leu-140) is a Leucine amide.

It belongs to the bombinin family. In terms of tissue distribution, expressed by the skin glands.

The protein resides in the secreted. Antimicrobial peptide with activity against Gram-positive and -negative bacteria and fungi. Shows activity against P.acnes (MIC=5 uM), E.coli (MIC=5-6.3 uM), S.aureus (MIC=5-6.3 uM), M.luteus, S.cerevisiae and C.albicans (MIC=10-12.5 uM). Also reduces the production of interleukin (IL)-8 and granulocyte-macrophage colony stimulating factor (CSF2) in normal human epidermal keratinocytes (NHEKs). Shows anticancer activity against three human hepatoma cell lines. In vivo, using the rat ear edema model, suppress P.acnes-induced skin inflammation, significantly reducing the ear thickness. Shows weak hemolytic activity against human erythrocytes. Its function is as follows. Shows weak antimicrobial activity (tested on E.coli, S.aureus and C.albicans). Shows high hemolytic activity against human erythrocytes (38% erythrocyte lysis at 80.0 uM, and up to 85% at 159.7 uM). The chain is Bombinins BLP-7/H-BO from Bombina orientalis (Oriental fire-bellied toad).